The sequence spans 66 residues: Gallinacin-8 (66 aa).

Residues 1 to 19 (MKILYLLLAVLLTVLQSSL) form the signal peptide. The propeptide occupies 20–25 (GFMRVP). Cystine bridges form between cysteine 31/cysteine 60, cysteine 38/cysteine 54, and cysteine 43/cysteine 61.

This sequence belongs to the beta-defensin family. Expressed in the liver, kidney, gall bladder, testis, ovary and male and femae reproductive tracts. Expressed in the ovarian stroma and the theca and granulosa layers of the ovarian follicle.

The protein resides in the secreted. Its subcellular location is the cytoplasmic granule. In terms of biological role, has bactericidal activity. This is Gallinacin-8 (GAL8) from Gallus gallus (Chicken).